A 704-amino-acid chain; its full sequence is E3 ubiquitin-protein ligase MBR1 (704 aa).

Disordered stretches follow at residues 1–20 (MNPM…VNQV), 37–61 (NPAD…SSSH), 176–197 (SSLG…SPFG), 245–354 (LSLA…GENQ), 381–403 (SNPS…PRSN), and 436–525 (SLFV…RHRR). The segment covering 43–61 (FPNNSTPSGRPTYASSSSH) has biased composition (polar residues). Composition is skewed to low complexity over residues 184–196 (AAGE…ASPF) and 245–255 (LSLATPSQSSP). 3 stretches are compositionally biased toward polar residues: residues 281 to 290 (FHSTRNTDTL), 300 to 329 (RQPQ…NLPL), and 340 to 354 (RSSS…GENQ). Pro residues predominate over residues 452 to 467 (QPNPTWIPPQNAPPHN). Low complexity predominate over residues 485 to 505 (SPSASHGGPLPLLPAGPSVSS). The RING-type; atypical zinc finger occupies 656 to 697 (CCICQEEYVEGDNLGTLKCGHEFHKDCIKQWVMIKNLCPICK).

The protein belongs to the RING-type zinc finger family. As to quaternary structure, interacts with MED25 and UBC11.

The catalysed reaction is S-ubiquitinyl-[E2 ubiquitin-conjugating enzyme]-L-cysteine + [acceptor protein]-L-lysine = [E2 ubiquitin-conjugating enzyme]-L-cysteine + N(6)-ubiquitinyl-[acceptor protein]-L-lysine.. It participates in protein modification; protein ubiquitination. Its function is as follows. E3 ubiquitin-protein ligase that functions as a regulator of MED25 stability by targeting MED25 for degradation in a RING-H2-dependent way. Proteasome-dependent degradation of MED25 seems to activate its function as positive regulator of FLOWERING LOCUS T (FT) and is important to induce the expression of FT and consequently to promote flowering. In Arabidopsis thaliana (Mouse-ear cress), this protein is E3 ubiquitin-protein ligase MBR1 (MBR1).